Reading from the N-terminus, the 322-residue chain is UPF0324 membrane protein BB4178 (322 aa).

Transmembrane regions (helical) follow at residues 13-35 (FIRQ…YGNF), 50-69 (FTAR…NISI), 76-98 (GLPG…TVAG), 108-127 (TAML…VLAF), 139-161 (AVAV…VIYH), 171-193 (ALGI…ASNI), 209-231 (VALL…AAGA), 241-260 (VPWF…LDIL), 273-292 (VFVL…FAQI), and 296-318 (GPRV…YGIV).

Belongs to the UPF0324 family.

It is found in the cell membrane. The protein is UPF0324 membrane protein BB4178 of Bordetella bronchiseptica (strain ATCC BAA-588 / NCTC 13252 / RB50) (Alcaligenes bronchisepticus).